The chain runs to 167 residues: MYWRTLWGFLWLWPYLFYIQAVPIQKVQSDTKTLIKTIVTRINDISHTQSVSSKQRVTGLDFIPGLHPVLTLSQMDQTLAIYQQILINLPSRNVIQISNDLENLRDLLHLLAFSKSCHLPLASGLETLESLGDVLEASLYSTEVVALSRLQGSLQDMLWQLDLSPGC.

Positions 1-21 (MYWRTLWGFLWLWPYLFYIQA) are cleaved as a signal peptide. Cys117 and Cys167 are oxidised to a cystine.

The protein belongs to the leptin family.

The protein localises to the secreted. Its function is as follows. Key player in the regulation of energy balance and body weight control. Once released into the circulation, has central and peripheral effects by binding LEPR, found in many tissues, which results in the activation of several major signaling pathways. In the hypothalamus, acts as an appetite-regulating factor that induces a decrease in food intake and an increase in energy consumption by inducing anorexinogenic factors and suppressing orexigenic neuropeptides, also regulates bone mass and secretion of hypothalamo-pituitary-adrenal hormones. In the periphery, increases basal metabolism, influences reproductive function, regulates pancreatic beta-cell function and insulin secretion, is pro-angiogenic for endothelial cell and affects innate and adaptive immunity. In the arcuate nucleus of the hypothalamus, activates by depolarization POMC neurons inducing FOS and SOCS3 expression to release anorexigenic peptides and inhibits by hyperpolarization NPY neurons inducing SOCS3 with a consequent reduction on release of orexigenic peptides. In addition to its known satiety inducing effect, has a modulatory role in nutrient absorption. In the intestine, reduces glucose absorption by enterocytes by activating PKC and leading to a sequential activation of p38, PI3K and ERK signaling pathways which exerts an inhibitory effect on glucose absorption. Acts as a growth factor on certain tissues, through the activation of different signaling pathways increases expression of genes involved in cell cycle regulation such as CCND1, via JAK2-STAT3 pathway, or VEGFA, via MAPK1/3 and PI3K-AKT1 pathways. May also play an apoptotic role via JAK2-STAT3 pathway and up-regulation of BIRC5 expression. Pro-angiogenic, has mitogenic activity on vascular endothelial cells and plays a role in matrix remodeling by regulating the expression of matrix metalloproteinases (MMPs) and tissue inhibitors of metalloproteinases (TIMPs). In innate immunity, modulates the activity and function of neutrophils by increasing chemotaxis and the secretion of oxygen radicals. Increases phagocytosis by macrophages and enhances secretion of pro-inflammatory mediators. Increases cytotoxic ability of NK cells. Plays a pro-inflammatory role, in synergy with IL1B, by inducing NOS2 which promotes the production of IL6, IL8 and Prostaglandin E2, through a signaling pathway that involves JAK2, PI3K, MAP2K1/MEK1 and MAPK14/p38. In adaptive immunity, promotes the switch of memory T-cells towards T helper-1 cell immune responses. Increases CD4(+)CD25(-) T-cell proliferation and reduces autophagy during TCR (T-cell receptor) stimulation, through MTOR signaling pathway activation and BCL2 up-regulation. This is Leptin (LEP) from Macaca mulatta (Rhesus macaque).